The following is a 119-amino-acid chain: Holo-[acyl-carrier-protein] synthase (119 aa).

D5 and E51 together coordinate Mg(2+).

The protein belongs to the P-Pant transferase superfamily. AcpS family. Mg(2+) is required as a cofactor.

Its subcellular location is the cytoplasm. The catalysed reaction is apo-[ACP] + CoA = holo-[ACP] + adenosine 3',5'-bisphosphate + H(+). Its function is as follows. Transfers the 4'-phosphopantetheine moiety from coenzyme A to a Ser of acyl-carrier-protein. The protein is Holo-[acyl-carrier-protein] synthase of Helicobacter pylori (strain G27).